We begin with the raw amino-acid sequence, 573 residues long: Ascochitine biosynthesis cluster transcriptional regulator (573 aa).

It is found in the nucleus. In terms of biological role, transcription factor that regulates the expression of the gene cluster that mediates the biosynthesis of the mycotoxin ascochitine, an o-quinone methide that plays a possible protective role against other microbial competitors in nature and is considered to be important for pathogenicity of legume-associated Didymella species. This chain is Ascochitine biosynthesis cluster transcriptional regulator, found in Didymella fabae (Leaf and pod spot disease fungus).